Here is a 215-residue protein sequence, read N- to C-terminus: NAD(P)H-quinone oxidoreductase subunit I (215 aa).

4Fe-4S ferredoxin-type domains follow at residues 55–84 (GRIHYEFDKCIACEVCVRVCPINLPVVDWV) and 95–124 (RNYSIDFGVCIFCGNCVEYCPTNCLSMTEE). Cys-64, Cys-67, Cys-70, Cys-74, Cys-104, Cys-107, Cys-110, and Cys-114 together coordinate [4Fe-4S] cluster. Residues 166 to 215 (AGEMDPHGVPNDRPRAGQLPSQVLETLAPPAKVGAKNEGQSTGTTQEGEA) form a disordered region. The span at 169–180 (MDPHGVPNDRPR) shows a compositional bias: basic and acidic residues. Residues 203–215 (EGQSTGTTQEGEA) show a composition bias toward polar residues.

The protein belongs to the complex I 23 kDa subunit family. NDH-1 is composed of at least 11 different subunits. The cofactor is [4Fe-4S] cluster.

It is found in the cellular thylakoid membrane. It catalyses the reaction a plastoquinone + NADH + (n+1) H(+)(in) = a plastoquinol + NAD(+) + n H(+)(out). It carries out the reaction a plastoquinone + NADPH + (n+1) H(+)(in) = a plastoquinol + NADP(+) + n H(+)(out). Its function is as follows. NDH-1 shuttles electrons from an unknown electron donor, via FMN and iron-sulfur (Fe-S) centers, to quinones in the respiratory and/or the photosynthetic chain. The immediate electron acceptor for the enzyme in this species is believed to be plastoquinone. Couples the redox reaction to proton translocation, and thus conserves the redox energy in a proton gradient. The protein is NAD(P)H-quinone oxidoreductase subunit I of Parasynechococcus marenigrum (strain WH8102).